The sequence spans 662 residues: UvrABC system protein B (662 aa).

One can recognise a Helicase ATP-binding domain in the interval 31-188 (DNIEGGEKAQ…NDLVDIQFER (158 aa)). 44 to 51 (GATGTGKT) is an ATP binding site. A Beta-hairpin motif is present at residues 97–120 (YYDYYQPEAYVPSSDTYIEKDSSV). In terms of domain architecture, Helicase C-terminal spans 435–601 (QIDDLLGEIN…TIKKEIRDLI (167 aa)). Residues 626 to 661 (KELVKKLEKQMQEAVEVLDFELAAQIRDMMLEVKAL) enclose the UVR domain.

It belongs to the UvrB family. Forms a heterotetramer with UvrA during the search for lesions. Interacts with UvrC in an incision complex.

The protein localises to the cytoplasm. Functionally, the UvrABC repair system catalyzes the recognition and processing of DNA lesions. A damage recognition complex composed of 2 UvrA and 2 UvrB subunits scans DNA for abnormalities. Upon binding of the UvrA(2)B(2) complex to a putative damaged site, the DNA wraps around one UvrB monomer. DNA wrap is dependent on ATP binding by UvrB and probably causes local melting of the DNA helix, facilitating insertion of UvrB beta-hairpin between the DNA strands. Then UvrB probes one DNA strand for the presence of a lesion. If a lesion is found the UvrA subunits dissociate and the UvrB-DNA preincision complex is formed. This complex is subsequently bound by UvrC and the second UvrB is released. If no lesion is found, the DNA wraps around the other UvrB subunit that will check the other stand for damage. The chain is UvrABC system protein B from Streptococcus pneumoniae serotype 19F (strain G54).